A 212-amino-acid polypeptide reads, in one-letter code: Large ribosomal subunit protein uL3 (212 aa).

The segment at 136 to 155 is disordered; the sequence is THGNSLSHRSNGSIGQNQTP. Residue Gln153 is modified to N5-methylglutamine.

It belongs to the universal ribosomal protein uL3 family. As to quaternary structure, part of the 50S ribosomal subunit. Forms a cluster with proteins L14 and L19. In terms of processing, methylated by PrmB.

In terms of biological role, one of the primary rRNA binding proteins, it binds directly near the 3'-end of the 23S rRNA, where it nucleates assembly of the 50S subunit. This Shewanella baltica (strain OS223) protein is Large ribosomal subunit protein uL3.